A 101-amino-acid polypeptide reads, in one-letter code: NADH-quinone oxidoreductase subunit K (101 aa).

3 consecutive transmembrane segments (helical) span residues 4–24 (LTHY…GIFL), 30–50 (IVLL…FIAF), and 61–81 (IFVF…LAIL).

This sequence belongs to the complex I subunit 4L family. In terms of assembly, NDH-1 is composed of 14 different subunits. Subunits NuoA, H, J, K, L, M, N constitute the membrane sector of the complex.

The protein localises to the cell inner membrane. The catalysed reaction is a quinone + NADH + 5 H(+)(in) = a quinol + NAD(+) + 4 H(+)(out). Its function is as follows. NDH-1 shuttles electrons from NADH, via FMN and iron-sulfur (Fe-S) centers, to quinones in the respiratory chain. The immediate electron acceptor for the enzyme in this species is believed to be ubiquinone. Couples the redox reaction to proton translocation (for every two electrons transferred, four hydrogen ions are translocated across the cytoplasmic membrane), and thus conserves the redox energy in a proton gradient. This Laribacter hongkongensis (strain HLHK9) protein is NADH-quinone oxidoreductase subunit K.